We begin with the raw amino-acid sequence, 723 residues long: E3 ubiquitin-protein ligase LRSAM1 (723 aa).

LRR repeat units follow at residues Ala30–Thr51, Gln56–Leu77, Thr82–Leu103, Ala105–Thr127, Gln128–Leu149, and Ser151–Val172. At Ser234 the chain carries Phosphoserine. Coiled coils occupy residues Ser254–Leu380 and Ala510–Ser562. The disordered stretch occupies residues Thr282 to Gln314. Positions Gln291–Gln314 are enriched in basic and acidic residues. The SAM domain occupies Gly569–Ala632. Ser604 bears the Phosphoserine mark. The interval Pro642–Pro665 is disordered. Short sequence motifs (PTAP motif) lie at residues Pro649 to Pro652 and Pro661 to Pro664. The RING-type zinc-finger motif lies at Cys675–Arg710.

As to quaternary structure, interacts with TSG101. Interacts with PHF23. Interacts with FUS. In terms of processing, ubiquitination promoted by PHF23 leads to proteasomal degradation. As to expression, highly expressed in adult spinal cord motoneurons as well as in fetal spinal cord and muscle tissue.

The protein resides in the cytoplasm. It catalyses the reaction S-ubiquitinyl-[E2 ubiquitin-conjugating enzyme]-L-cysteine + [acceptor protein]-L-lysine = [E2 ubiquitin-conjugating enzyme]-L-cysteine + N(6)-ubiquitinyl-[acceptor protein]-L-lysine.. Its pathway is protein modification; protein ubiquitination. E3 ubiquitin-protein ligase that mediates monoubiquitination of TSG101 at multiple sites, leading to inactivate the ability of TSG101 to sort endocytic (EGF receptors) and exocytic (HIV-1 viral proteins) cargos. Bacterial recognition protein that defends the cytoplasm from invasive pathogens. Localizes to several intracellular bacterial pathogens and generates the bacteria-associated ubiquitin signal leading to autophagy-mediated intracellular bacteria degradation (xenophagy). In Homo sapiens (Human), this protein is E3 ubiquitin-protein ligase LRSAM1.